We begin with the raw amino-acid sequence, 188 residues long: Cell division protein SepF (188 aa).

Residues threonine 152–valine 162 are compositionally biased toward polar residues. The segment at threonine 152 to leucine 188 is disordered.

The protein belongs to the SepF family. Homodimer. Interacts with FtsZ.

The protein localises to the cytoplasm. In terms of biological role, cell division protein that is part of the divisome complex and is recruited early to the Z-ring. Probably stimulates Z-ring formation, perhaps through the cross-linking of FtsZ protofilaments. Its function overlaps with FtsA. The chain is Cell division protein SepF from Parasynechococcus marenigrum (strain WH8102).